Here is a 101-residue protein sequence, read N- to C-terminus: Small ribosomal subunit protein uS14 (101 aa).

Belongs to the universal ribosomal protein uS14 family. In terms of assembly, part of the 30S ribosomal subunit. Contacts proteins S3 and S10.

In terms of biological role, binds 16S rRNA, required for the assembly of 30S particles and may also be responsible for determining the conformation of the 16S rRNA at the A site. The chain is Small ribosomal subunit protein uS14 from Escherichia coli O8 (strain IAI1).